We begin with the raw amino-acid sequence, 561 residues long: Arf-GAP domain and FG repeat-containing protein 1 (561 aa).

Positions 11-135 constitute an Arf-GAP domain; it reads EKHLKMLRDM…WYVPPEQAKV (125 aa). A C4-type zinc finger spans residues 29 to 52; it reads CFDCDQRGPTYVNMTVGSFVCTSC. S167 carries the phosphoserine modification. The segment at 171–193 is disordered; it reads LHLNKGTPTQSPVVGRSQGQQQE. Polar residues predominate over residues 176-191; it reads GTPTQSPVVGRSQGQQ. T177 is modified (phosphothreonine). Residues S181 and S362 each carry the phosphoserine modification. Residue S367 is glycosylated (O-linked (GlcNAc) serine). Residues 409-451 form a disordered region; it reads PVGASPQTQPASSGPAPFGATPSTNPFVAATGPSAASSTNPFQ. A compositionally biased stretch (polar residues) spans 442–451; that stretch reads SAASSTNPFQ.

In terms of assembly, interacts with EPS15R and EPS15. Interacts with FCHO1. In terms of processing, O-glycosylated.

It is found in the nucleus. Its subcellular location is the cytoplasmic vesicle. Its function is as follows. Required for vesicle docking or fusion during acrosome biogenesis. May play a role in RNA trafficking or localization. The chain is Arf-GAP domain and FG repeat-containing protein 1 (Agfg1) from Rattus norvegicus (Rat).